A 442-amino-acid chain; its full sequence is 3-oxoacyl-[acyl-carrier-protein] synthase homolog (442 aa).

The region spanning 2-438 is the Ketosynthase family 3 (KS3) domain; that stretch reads SRRVVITGLG…GVNTSLLFKK (437 aa). Residues cysteine 187, histidine 322, and histidine 362 each act as for beta-ketoacyl synthase activity in the active site.

This sequence belongs to the thiolase-like superfamily. Beta-ketoacyl-ACP synthases family.

The protein localises to the mitochondrion. It carries out the reaction a fatty acyl-[ACP] + malonyl-[ACP] + H(+) = a 3-oxoacyl-[ACP] + holo-[ACP] + CO2. Functionally, possibly involved in the synthesis of a specialized molecule, probably related to a fatty acid, which is essential for mitochondrial respiration. Is essential for oxygen uptake and the presence of cytochromes A and B. The polypeptide is 3-oxoacyl-[acyl-carrier-protein] synthase homolog (CEM1) (Saccharomyces cerevisiae (strain ATCC 204508 / S288c) (Baker's yeast)).